Consider the following 65-residue polypeptide: UPF0434 protein HS_0657 (65 aa).

The protein belongs to the UPF0434 family.

This chain is UPF0434 protein HS_0657, found in Histophilus somni (strain 129Pt) (Haemophilus somnus).